Reading from the N-terminus, the 138-residue chain is Acidic phospholipase A2 1 (138 aa).

The signal sequence occupies residues 1 to 16 (MRTLWIMAVLLVGVEG). 7 disulfide bridges follow: Cys-42–Cys-131, Cys-44–Cys-60, Cys-59–Cys-111, Cys-65–Cys-138, Cys-66–Cys-104, Cys-73–Cys-97, and Cys-91–Cys-102. 3 residues coordinate Ca(2+): Phe-43, Gly-45, and Gly-47. His-63 is a catalytic residue. Position 64 (Asp-64) interacts with Ca(2+). Residue Asp-105 is part of the active site.

It belongs to the phospholipase A2 family. Group II subfamily. D49 sub-subfamily. Ca(2+) serves as cofactor. Expressed by the venom gland.

The protein resides in the secreted. It carries out the reaction a 1,2-diacyl-sn-glycero-3-phosphocholine + H2O = a 1-acyl-sn-glycero-3-phosphocholine + a fatty acid + H(+). Functionally, snake venom phospholipase A2 (PLA2) that has high lipolytic activity. PLA2 catalyzes the calcium-dependent hydrolysis of the 2-acyl groups in 3-sn-phosphoglycerides. The sequence is that of Acidic phospholipase A2 1 from Craspedocephalus gramineus (Bamboo pit viper).